The sequence spans 1265 residues: Methionine synthase (1265 aa).

The Hcy-binding domain maps to 19-338; it reads QDEIEAILQE…DHIREIAEAV (320 aa). Zn(2+) is bound by residues cysteine 260, cysteine 323, and cysteine 324. The Pterin-binding domain maps to 371 to 632; that stretch reads FVNIGERCNV…IHKELLQLCE (262 aa). (6S)-5,6,7,8-tetrahydrofolate-binding positions include 382–384, aspartate 449, asparagine 470, aspartate 537, asparagine 579, arginine 585, and arginine 591; that span reads GSR. Residues 662-759 form the B12-binding N-terminal domain; it reads QTDEWRNGPL…FMEKEREETK (98 aa). Residues glutamate 709, 782 to 786, histidine 785, serine 830, threonine 834, and alanine 886 contribute to the methylcob(III)alamin site; that span reads GDVHD. Positions 772 to 907 constitute a B12-binding domain; that stretch reads QGTIVLATVK…DENLKDEYFE (136 aa). An AdoMet activation domain is found at 923 to 1265; that stretch reads SLKERRYLTL…LGPILGYDTD (343 aa). S-adenosyl-L-methionine-binding positions include aspartate 974, arginine 1172, and 1227–1228; that span reads YF. Threonine 1264 is subject to Phosphothreonine.

This sequence belongs to the vitamin-B12 dependent methionine synthase family. In terms of assembly, monomer. Dimer. Forms a multiprotein complex with MMACHC, MMADHC and MTRR. It depends on methylcob(III)alamin as a cofactor. The cofactor is Zn(2+).

The protein resides in the cytoplasm. The catalysed reaction is (6S)-5-methyl-5,6,7,8-tetrahydrofolate + L-homocysteine = (6S)-5,6,7,8-tetrahydrofolate + L-methionine. It functions in the pathway amino-acid biosynthesis; L-methionine biosynthesis via de novo pathway; L-methionine from L-homocysteine (MetH route): step 1/1. Its function is as follows. Catalyzes the transfer of a methyl group from methylcob(III)alamin (MeCbl) to homocysteine, yielding enzyme-bound cob(I)alamin and methionine in the cytosol. MeCbl is an active form of cobalamin (vitamin B12) used as a cofactor for methionine biosynthesis. Cob(I)alamin form is regenerated to MeCbl by a transfer of a methyl group from 5-methyltetrahydrofolate. The processing of cobalamin in the cytosol occurs in a multiprotein complex composed of at least MMACHC, MMADHC, MTRR (methionine synthase reductase) and MTR which may contribute to shuttle safely and efficiently cobalamin towards MTR in order to produce methionine. This Bos taurus (Bovine) protein is Methionine synthase (MTR).